We begin with the raw amino-acid sequence, 195 residues long: 7-methyl-GTP pyrophosphatase (195 aa).

The active-site Proton acceptor is aspartate 71.

This sequence belongs to the Maf family. YceF subfamily. Requires a divalent metal cation as cofactor.

The protein localises to the cytoplasm. The catalysed reaction is N(7)-methyl-GTP + H2O = N(7)-methyl-GMP + diphosphate + H(+). In terms of biological role, nucleoside triphosphate pyrophosphatase that hydrolyzes 7-methyl-GTP (m(7)GTP). May have a dual role in cell division arrest and in preventing the incorporation of modified nucleotides into cellular nucleic acids. This is 7-methyl-GTP pyrophosphatase from Shewanella oneidensis (strain ATCC 700550 / JCM 31522 / CIP 106686 / LMG 19005 / NCIMB 14063 / MR-1).